We begin with the raw amino-acid sequence, 270 residues long: Putative phosphoenolpyruvate synthase regulatory protein (270 aa).

150–157 (GVSRCGKT) is an ADP binding site.

It belongs to the pyruvate, phosphate/water dikinase regulatory protein family. PSRP subfamily.

It carries out the reaction [pyruvate, water dikinase] + ADP = [pyruvate, water dikinase]-phosphate + AMP + H(+). It catalyses the reaction [pyruvate, water dikinase]-phosphate + phosphate + H(+) = [pyruvate, water dikinase] + diphosphate. Its function is as follows. Bifunctional serine/threonine kinase and phosphorylase involved in the regulation of the phosphoenolpyruvate synthase (PEPS) by catalyzing its phosphorylation/dephosphorylation. The polypeptide is Putative phosphoenolpyruvate synthase regulatory protein (Shewanella pealeana (strain ATCC 700345 / ANG-SQ1)).